The chain runs to 270 residues: Glutamate racemase (270 aa).

Substrate-binding positions include 13 to 14 (DS) and 45 to 46 (YG). C77 serves as the catalytic Proton donor/acceptor. 78 to 79 (NT) serves as a coordination point for substrate. C185 acts as the Proton donor/acceptor in catalysis. 186–187 (TH) lines the substrate pocket.

The protein belongs to the aspartate/glutamate racemases family.

It catalyses the reaction L-glutamate = D-glutamate. It functions in the pathway cell wall biogenesis; peptidoglycan biosynthesis. Its function is as follows. Provides the (R)-glutamate required for cell wall biosynthesis. The chain is Glutamate racemase from Vibrio parahaemolyticus serotype O3:K6 (strain RIMD 2210633).